A 1746-amino-acid polypeptide reads, in one-letter code: Inactive tyrosine-protein kinase PEAK1 (1746 aa).

Residues 44–66 (KTNANHSNNHRIRNTGNFRPPVA) are disordered. Serine 281 carries the phosphoserine modification. Disordered stretches follow at residues 334–411 (QSMV…KVPE) and 489–517 (LEGPVNSPKTKSSSSTPNSPVTSSSLTPG). The segment covering 338 to 349 (SSDSTSPDSSLT) has biased composition (low complexity). Over residues 355–364 (ETASSLSQKI) the composition is skewed to polar residues. The segment covering 492–513 (PVNSPKTKSSSSTPNSPVTSSS) has biased composition (low complexity). Residues serine 540, serine 572, and serine 587 each carry the phosphoserine modification. Positions 551–577 (ITSGTGPNVPPRKNCHKSAPTSPTATN) are disordered. Tyrosine 635 and tyrosine 641 each carry phosphotyrosine. A Phosphoserine modification is found at serine 648. Tyrosine 665 carries the post-translational modification Phosphotyrosine. Disordered stretches follow at residues 671-700 (ESKVPDNTTSKTTDCLQTKGFSNSTEHKRG), 713-764 (LNRG…EKAS), 802-920 (DADV…AADA), 1052-1102 (VTED…DPNP), and 1138-1158 (GKTDQEAPNASQPTPPPLPKK). A compositionally biased stretch (polar residues) spans 675-694 (PDNTTSKTTDCLQTKGFSNS). Low complexity predominate over residues 718 to 730 (SSPQRSYSSSHSS). 2 stretches are compositionally biased toward polar residues: residues 748–758 (TQESQMVGSSS) and 820–841 (LFTSQPSGEAEAPQTTDSPTTK). Phosphoserine is present on residues serine 826 and serine 854. The span at 864 to 874 (SEPPAPFPPPR) shows a compositional bias: pro residues. A compositionally biased stretch (polar residues) spans 889–902 (HFTNWTKPTSPTRS). Residue serine 898 is modified to Phosphoserine. 3 stretches are compositionally biased toward basic and acidic residues: residues 903 to 920 (TEAESVLHSEGSRRAADA), 1052 to 1062 (VTEDFSPRDPR), and 1084 to 1094 (ELEREDGKEDI). The residue at position 1151 (threonine 1151) is a Phosphothreonine. Position 1188 is a phosphotyrosine (tyrosine 1188). The required for homodimerization stretch occupies residues 1285 to 1311 (EVVGKIRSLHTDALKKLAVKCEDLFMA). Residues 1313–1675 (QKDQLRFGVD…LLWGPREDLF (363 aa)) form the Protein kinase domain. Residue serine 1374 is modified to Phosphoserine. Positions 1402–1456 (LLPWEDPDDPEKDEDDMEETEEDAKGETDGKNPKPCSEAASSQKENQGVMSKKQR) are disordered. Residues 1406 to 1423 (EDPDDPEKDEDDMEETEE) show a composition bias toward acidic residues. The span at 1424-1433 (DAKGETDGKN) shows a compositional bias: basic and acidic residues. The segment covering 1440–1450 (AASSQKENQGV) has biased composition (polar residues). The tract at residues 1670 to 1743 (PREDLFQTFT…DSLSCIVKIL (74 aa)) is required for homodimerization.

This sequence belongs to the protein kinase superfamily. As to quaternary structure, homodimer. Interacts with BCAR1 and CRK. Interacts with PRAG1. Interacts (when phosphorylated at Tyr-1188) with SHC1 (via PID domain). Found in a complex with PPP1CA, PPP1CC, SHC1 and PEAK1. Interacts (when phosphorylated at Tyr-635) with tensin TNS3 (when phosphorylated on the SH2 domain); TNS3 also interacts with integrins ITGB1, ITGB3 and ITGB5 and mediates their association with PEAK1. Interacts with RASAL2 and GRB2. In terms of processing, phosphorylated on tyrosine in a CSK-dependent manner in response to adhesion to fibronectin and to EGF stimulation. Phosphorylation at Tyr-665 by a Src family kinase controls subcellular localization to focal adhesion and focal adhesion dynamics. Phosphorylation at Tyr-1188 is essential for binding to SHC1. Phosphorylation at Tyr-635 promotes interaction with tensin TNS3.

The protein localises to the cytoplasm. The protein resides in the cytoskeleton. It localises to the cell junction. Its subcellular location is the focal adhesion. Probable catalytically inactive kinase. Scaffolding protein that regulates the cytoskeleton to control cell spreading and migration by modulating focal adhesion dynamics. Acts as a scaffold for mediating EGFR signaling. This Homo sapiens (Human) protein is Inactive tyrosine-protein kinase PEAK1 (PEAK1).